A 128-amino-acid polypeptide reads, in one-letter code: Small ribosomal subunit protein uS12 (128 aa).

Aspartate 89 is subject to 3-methylthioaspartic acid. Positions 101-128 are disordered; that stretch reads SLDTSGVADRRQGRSKYGAKRPKGAAAK. Residues 113 to 128 show a composition bias toward basic residues; that stretch reads GRSKYGAKRPKGAAAK.

This sequence belongs to the universal ribosomal protein uS12 family. Part of the 30S ribosomal subunit. Contacts proteins S8 and S17. May interact with IF1 in the 30S initiation complex.

With S4 and S5 plays an important role in translational accuracy. In terms of biological role, interacts with and stabilizes bases of the 16S rRNA that are involved in tRNA selection in the A site and with the mRNA backbone. Located at the interface of the 30S and 50S subunits, it traverses the body of the 30S subunit contacting proteins on the other side and probably holding the rRNA structure together. The combined cluster of proteins S8, S12 and S17 appears to hold together the shoulder and platform of the 30S subunit. This is Small ribosomal subunit protein uS12 from Prosthecochloris aestuarii (strain DSM 271 / SK 413).